Here is a 155-residue protein sequence, read N- to C-terminus: Ribosomal RNA large subunit methyltransferase H (155 aa).

S-adenosyl-L-methionine contacts are provided by residues leucine 72, glycine 103, and 122-127; that span reads LSALTL.

This sequence belongs to the RNA methyltransferase RlmH family. As to quaternary structure, homodimer.

Its subcellular location is the cytoplasm. The enzyme catalyses pseudouridine(1915) in 23S rRNA + S-adenosyl-L-methionine = N(3)-methylpseudouridine(1915) in 23S rRNA + S-adenosyl-L-homocysteine + H(+). Its function is as follows. Specifically methylates the pseudouridine at position 1915 (m3Psi1915) in 23S rRNA. This Salmonella choleraesuis (strain SC-B67) protein is Ribosomal RNA large subunit methyltransferase H.